A 229-amino-acid chain; its full sequence is Uridylate cyclase (229 aa).

In terms of domain architecture, Guanylate cyclase spans 47 to 178 (TVLYADLDGS…RAANYAAKLT (132 aa)). Tyr50 provides a ligand contact to a ribonucleoside 5'-triphosphate. 2 residues coordinate Mn(2+): Asp52 and Asp96. An a ribonucleoside 5'-triphosphate-binding site is contributed by Arg97.

The protein belongs to the adenylyl cyclase class-4/guanylyl cyclase family. Pyrimidine cyclase subfamily. As to quaternary structure, homodimer. Requires Mn(2+) as cofactor.

The protein localises to the cytoplasm. The catalysed reaction is UTP = 3',5'-cyclic UMP + diphosphate. Functionally, pycsar (pyrimidine cyclase system for antiphage resistance) provides immunity against bacteriophage. The pyrimidine cyclase (PycC) synthesizes cyclic nucleotides in response to infection; these serve as specific second messenger signals. The signals activate the adjacent effector, leading to bacterial cell death and abortive phage infection. A clade B Pycsar system. In terms of biological role, the pyrimidine cyclase gene of a two-gene Pycsar system, generates cyclic UMP (cUMP) from UTP, has little to no activity on ATP, CTP or GTP. Expression of this and adjacent effector BcPycTIR (AC A0A0J5WTU0) probably confers resistance to bacteriophage. The genes are probably only expressed in response to bacteriophage infection. The chain is Uridylate cyclase from Burkholderia cepacia (Pseudomonas cepacia).